Here is a 131-residue protein sequence, read N- to C-terminus: Torsin-1A-interacting protein 2, isoform IFRG15 (131 aa).

The polypeptide is Torsin-1A-interacting protein 2, isoform IFRG15 (TOR1AIP2) (Homo sapiens (Human)).